The chain runs to 204 residues: Probable GTP-binding protein EngB (204 aa).

A disordered region spans residues 1 to 21 (MKVSSAEFVTSGTRPAHYPPP). The 173-residue stretch at 22-194 (ELPEVAFAGR…WARIEVMLAA (173 aa)) folds into the EngB-type G domain. GTP is bound by residues 30-37 (GRSNVGKS), 57-61 (GRTQL), 75-78 (DLPG), 142-145 (TKCD), and 173-175 (FSA). Residues Ser37 and Thr59 each coordinate Mg(2+).

Belongs to the TRAFAC class TrmE-Era-EngA-EngB-Septin-like GTPase superfamily. EngB GTPase family. Mg(2+) is required as a cofactor.

Necessary for normal cell division and for the maintenance of normal septation. The chain is Probable GTP-binding protein EngB from Geobacter metallireducens (strain ATCC 53774 / DSM 7210 / GS-15).